Here is a 261-residue protein sequence, read N- to C-terminus: Leucine-rich repeat-containing protein 18 (261 aa).

7 LRR repeats span residues 28-49 (GKKRLDLSKMGITTFPKCILRL), 51-72 (DMDELDLSRNLIRKIPDSISKF), 74-95 (NLRWLDLHSNYIDKLPESIGQM), 97-118 (SLLYLNVSNNRLTSNGLPVELK), 122-144 (NIRAVNLGLNHLDSVPTTLGALK), 145-167 (ELHEVGLHDNLLNNIPVSISKLP), and 168-189 (KLKKLNIKRNPFPKPGESEIFI).

The protein resides in the cytoplasm. Its function is as follows. May be involved in the regulation of spermatogenesis and sperm maturation. This Homo sapiens (Human) protein is Leucine-rich repeat-containing protein 18 (LRRC18).